A 103-amino-acid polypeptide reads, in one-letter code: Small ribosomal subunit protein uS10 (103 aa).

This sequence belongs to the universal ribosomal protein uS10 family. In terms of assembly, part of the 30S ribosomal subunit.

In terms of biological role, involved in the binding of tRNA to the ribosomes. The sequence is that of Small ribosomal subunit protein uS10 from Wigglesworthia glossinidia brevipalpis.